The following is a 1852-amino-acid chain: Chitin synthase csmA (1852 aa).

The segment at 1-20 (MVGTLPAGHTPSHVQSSLPS) is disordered. Residues 1–787 (MVGTLPAGHT…CWADLAKVGE (787 aa)) enclose the Myosin motor domain. N58 is a glycosylation site (N-linked (GlcNAc...) asparagine). Residue 102–109 (GESGAGKT) participates in ATP binding. Residues 599–646 (SSKPLRMPSMARRKTSPASRLTFDATPAEDPYETESQTGSSAKNSSAK) are disordered. N-linked (GlcNAc...) asparagine glycosylation is present at N642. An actin-binding region spans residues 667–691 (LDIVNKCLTSGNLNPYFVFCLKPND). N-linked (GlcNAc...) asparagine glycosylation is present at N840. Helical transmembrane passes span 895 to 915 (WMAIVWLLTFYIPTPAIRYIG) and 930 to 950 (FAINLLIWLACAIAVFIIVGF). Residues 958-1017 (QHVYSPAELSSHDGKDGHSSYTSIRGLVLDLGEFMDSHYPGIVPDSALKKYAGVDSTALF) form the Cytochrome b5 heme-binding domain. N-linked (GlcNAc...) asparagine glycans are attached at residues N1044 and N1195. A helical membrane pass occupies residues 1205–1225 (FILAISVLICSVIVFKFFAAL). 3 N-linked (GlcNAc...) asparagine glycosylation sites follow: N1428, N1462, and N1568. Transmembrane regions (helical) follow at residues 1600 to 1620 (ISTIIMPVTVAYIVYLIVWLV), 1626 to 1646 (IPWTSFLLLAAIYGLQAIIFI), and 1653 to 1673 (MIGWMIIYILAIPVYSLALPL). A DEK-C domain is found at 1794–1849 (LPSDDAILSEIRDILRTADLMTVTKKNIKQELERRFGVNLDAKRPYINSATEAVLS).

In the N-terminal section; belongs to the TRAFAC class myosin-kinesin ATPase superfamily. Myosin family. The protein in the C-terminal section; belongs to the chitin synthase family. Class V subfamily. As to quaternary structure, binds F-actin via its N-terminal myosin motor-like domain (MMD). Interacts with kibesin kinA.

The protein resides in the cell membrane. It localises to the cell septum. Its subcellular location is the cell tip. It carries out the reaction [(1-&gt;4)-N-acetyl-beta-D-glucosaminyl](n) + UDP-N-acetyl-alpha-D-glucosamine = [(1-&gt;4)-N-acetyl-beta-D-glucosaminyl](n+1) + UDP + H(+). Its function is as follows. Polymerizes chitin, a structural polymer of the cell wall and septum, by transferring the sugar moiety of UDP-GlcNAc to the non-reducing end of the growing chitin polymer. Plays an important role in polarized hyphal cell wall synthesis and maintenance of cell wall integrity. Its role in growth and morphogenesis is particularly important under low osmotic conditions. The protein is Chitin synthase csmA of Emericella nidulans (Aspergillus nidulans).